Here is a 129-residue protein sequence, read N- to C-terminus: uncharacterized protein (129 aa).

This is an uncharacterized protein from Invertebrate iridescent virus 6 (IIV-6).